The primary structure comprises 873 residues: Potassium voltage-gated channel subfamily KQT member 3 (873 aa).

The segment at 1 to 41 is disordered; it reads MGLKARRAAGAAGGGGGEGGGGGGGAANPAGGDSAVAGDEE. Over 1–121 the chain is Cytoplasmic; that stretch reads MGLKARRAAG…IYDALERPRG (121 aa). A compositionally biased stretch (gly residues) spans 11–26; that stretch reads AAGGGGGEGGGGGGGA. Position 82 is a phosphothreonine (Thr82). Residues 122 to 144 traverse the membrane as a helical segment; sequence WALLYHALVFLIVLGCLILAVLT. At 145-154 the chain is on the extracellular side; the sequence is TFKEYETVSG. A helical membrane pass occupies residues 155–176; that stretch reads DWLLLLETFAIFIFGAEFALRI. Residues 177–194 are Cytoplasmic-facing; the sequence is WAAGCCCRYKGWRGRLKF. A helical transmembrane segment spans residues 195 to 214; sequence ARKPLCMLDIFVLIASVPVV. The Extracellular segment spans residues 215–226; it reads AVGNQGNVLATS. The chain crosses the membrane as a helical; Voltage-sensor span at residues 227–245; it reads LRSLRFLQILRMLRMDRRG. A 1,2-diacyl-sn-glycero-3-phospho-(1D-myo-inositol-4,5-bisphosphate) is bound at residue Arg244. The Cytoplasmic segment spans residues 246 to 257; the sequence is GTWKLLGSAICA. A helical membrane pass occupies residues 258–283; the sequence is HSKELITAWYIGFLTLILSSFLVYLV. Lys260 contributes to the a 1,2-diacyl-sn-glycero-3-phospho-(1D-myo-inositol-4,5-bisphosphate) binding site. At 284 to 303 the chain is on the extracellular side; it reads EKDVPEMDAQGEEMKEEFET. The segment at residues 304–316 is an intramembrane region (pore-forming); that stretch reads YADALWWGLITLA. A Selectivity filter motif is present at residues 317 to 322; that stretch reads TIGYGD. Over 317–327 the chain is Extracellular; that stretch reads TIGYGDKTPKT. The helical transmembrane segment at 328–354 threads the bilayer; it reads WEGRLIAATFSLIGVSFFALPAGILGS. The Cytoplasmic segment spans residues 355-873; it reads GLALKVQEQH…SIWTPSNKPT (519 aa). The mediates interaction with calmodulin stretch occupies residues 357-538; sequence ALKVQEQHRQ…RLYKKKFKET (182 aa). Lys367 provides a ligand contact to a 1,2-diacyl-sn-glycero-3-phospho-(1D-myo-inositol-4,5-bisphosphate). 3 disordered regions span residues 575–603, 723–742, and 766–873; these read PGPP…PRNE, RGGP…GSTY, and ELQG…NKPT. Composition is skewed to polar residues over residues 588 to 601, 725 to 741, and 844 to 873; these read KGSA…QSPR, GPSS…SGST, and DPFT…NKPT.

The protein belongs to the potassium channel family. KQT (TC 1.A.1.15) subfamily. Kv7.3/KCNQ3 sub-subfamily. Heterotetramer with KCNQ2; forms heterotetrameric native M-channel responsible for the M-current. Interacts with calmodulin; the interaction is calcium-independent, constitutive and participates in the proper assembly of a functional M-channel. Heteromultimer with KCNQ5. May associate with KCNE2. Interacts with IQCJ-SCHIP1. Interacts (via the pore module) with SLC5A3/SMIT1; forms a coregulatory complex that alters ion selectivity, voltage dependence and gating kinetics of the channel. Post-translationally, KCNQ2/KCNQ3 are ubiquitinated by NEDD4L. Ubiquitination leads to protein degradation. Degradation induced by NEDD4L is inhibited by USP36. In terms of tissue distribution, expressed in dorsal root ganglion (DRG) neurons.

It localises to the cell membrane. It carries out the reaction K(+)(in) = K(+)(out). It catalyses the reaction Rb(+)(in) = Rb(+)(out). The catalysed reaction is Cs(+)(in) = Cs(+)(out). The enzyme catalyses Na(+)(in) = Na(+)(out). Its activity is regulated as follows. Phosphatidylinositol-4,5-bisphosphate (PIP2) potentiates the activation of KCNQ channels by enhancing the electro-mechanical coupling of the voltage-sensing domain (VSD) and the pore-forming domain (PD). In the closed state of the channel, PIP2 is anchored at the S2-S3 loop; upon channel activation, PIP2 interacts with the S4-S5 linker and is involved in channel gating. Calcium suppresses KCNQ2-KCNQ3 channel currents, with calcium-bound calmodulin inducing a change in channel configuration which leads to the reduction of channel affinity for PIP2 and subsequent current suppression. Its function is as follows. Pore-forming subunit of the voltage-gated potassium (Kv) M-channel which is responsible for the M-current, a key controller of neuronal excitability. M-channel is composed of pore-forming subunits KCNQ2 and KCNQ3 assembled as heterotetramers. The native M-current has a slowly activating and deactivating potassium conductance which plays a critical role in determining the subthreshold electrical excitability of neurons as well as the responsiveness to synaptic inputs. M-channel is selectively permeable in vitro to other cations besides potassium, in decreasing order of affinity K(+) &gt; Rb(+) &gt; Cs(+) &gt; Na(+). M-channel association with SLC5A3/SMIT1 alters channel ion selectivity, increasing Na(+) and Cs(+) permeation relative to K(+). Suppressed by activation of M1 muscarinic acetylcholine receptors. KCNQ3 also associates with KCNQ5 to form a functional channel in vitro and may also contribute to the M-current in brain. The sequence is that of Potassium voltage-gated channel subfamily KQT member 3 from Mus musculus (Mouse).